Here is a 794-residue protein sequence, read N- to C-terminus: ALG-2 interacting protein X (794 aa).

Residues 1–385 (MLSIERKRTE…DNIEFHNQSA (385 aa)) enclose the BRO1 domain. Coiled-coil stretches lie at residues 499–568 (SFIR…LCKK) and 600–655 (LNES…NLDE). The tract at residues 695-794 (GVNPHSPLTS…PPYNSNNKHY (100 aa)) is disordered. A compositionally biased stretch (low complexity) spans 698-712 (PHSPLTSPSPSLQSP). Polar residues predominate over residues 713-722 (VNNYPNQFSS). Composition is skewed to low complexity over residues 723–742 (PQYHTSPNQQQQQQQQYVPS) and 749–764 (YSYNPQPYQPPQQFGG). Residues 765-787 (PLPPPQSFSAPPPPQSFTAPPPY) show a composition bias toward pro residues.

Self-associates; the interaction is calcium-independent Interacts with pefa; the interaction is calcium-dependent. Interacts with pefb; the interaction is calcium-dependent.

The protein resides in the cytoplasm. The protein localises to the cytoplasmic vesicle membrane. It localises to the endosome. In terms of biological role, unknown. Required for development but not for cell death. The polypeptide is ALG-2 interacting protein X (alxA) (Dictyostelium discoideum (Social amoeba)).